Consider the following 282-residue polypeptide: Osteoclast-associated immunoglobulin-like receptor (282 aa).

The signal sequence occupies residues 1–18 (MALVLILQLLTLWPLCHT). 2 Ig-like domains span residues 22-116 (PSVP…SQPS) and 126-219 (ELPR…SWEG). An N-linked (GlcNAc...) asparagine glycan is attached at asparagine 48. A disulfide bond links cysteine 53 and cysteine 100. Asparagine 145 carries an N-linked (GlcNAc...) asparagine glycan. The disordered stretch occupies residues 221–282 (GPEARPASSA…PAPPPSDPGV (62 aa)). Pro residues predominate over residues 273–282 (PAPPPSDPGV).

The protein belongs to the leukocyte receptor complex/polymeric immunoglobulin receptor (PIR/LRC) family.

The protein localises to the secreted. It localises to the cell membrane. Regulator of osteoclastogenesis which plays an important bone-specific function in osteoclast differentiation. In Homo sapiens (Human), this protein is Osteoclast-associated immunoglobulin-like receptor (OSCAR).